We begin with the raw amino-acid sequence, 71 residues long: Cell division protein FtsB (71 aa).

The Cytoplasmic segment spans residues 1–3; sequence MKI. Residues 4 to 21 traverse the membrane as a helical segment; that stretch reads LKIFLLSLLFWLQYSLWF. At 22–71 the chain is on the extracellular side; the sequence is GKNGVLDFIKIYRRVTIEKKNNEYLDMRNNQIILEIENFNNHINKDKKKT.

Belongs to the FtsB family.

It is found in the cell membrane. Essential cell division protein. May link together the upstream cell division proteins, which are predominantly cytoplasmic, with the downstream cell division proteins, which are predominantly extracellular. This Buchnera aphidicola subsp. Acyrthosiphon pisum (strain APS) (Acyrthosiphon pisum symbiotic bacterium) protein is Cell division protein FtsB.